Consider the following 515-residue polypeptide: MRTFAPWILSLLGASAVASAADATAEAPSDVVSLTGDTFETFVKEHDLVLAEFFAPWCGHCKALAPKYEQAATELKEKNIPLVKVDCTEEEALCRDQGVEGYPTLKIFRGLDAVKPYQGARQTEAIVSYMVKQSLPAVSPVTPENLEEIKTMDKIVVIGYIASDDQTANDIFTTFAESQRDNYLFAATSDASIAKAEGVKQPSIVLYKDFDEKKATYDGEIEQDALLSWVKTASTPLVGELGPETYSGYITAGIPLAYIFAETKEEREQFTEEFKFIAEKHKGSINIVTIDAKLYGAHAGNLNLDPSKFPAFAIQDPEKNAKYPYDQSKEVKAKDIGKFIQDVLDDKVEPSIKSEAIPETQEGPVTVVVAHSYKDLVLDNEKDVLLEFYAPWCGHCKALAPKYEELASLYKDIPEVTIAKIDATANDVPDSITGFPTIKLFAAGAKDSPVEYEGSRTVEDLANFVKENGKHKVDALEVDPKKEQESGDATETRAASDETETPAATSDDKSEHDEL.

A signal peptide spans 1–20; the sequence is MRTFAPWILSLLGASAVASA. Thioredoxin domains are found at residues 21-136 and 343-470; these read ADAT…QSLP and VLDD…ENGK. Active-site nucleophile residues include cysteine 58, cysteine 61, cysteine 393, and cysteine 396. Cystine bridges form between cysteine 58/cysteine 61 and cysteine 393/cysteine 396. Basic and acidic residues-rich tracts occupy residues 472–496 and 506–515; these read KVDA…RAAS and SDDKSEHDEL. Positions 472–515 are disordered; the sequence is KVDALEVDPKKEQESGDATETRAASDETETPAATSDDKSEHDEL. Residues 512–515 carry the Prevents secretion from ER motif; it reads HDEL.

The protein belongs to the protein disulfide isomerase family.

It localises to the endoplasmic reticulum lumen. The catalysed reaction is Catalyzes the rearrangement of -S-S- bonds in proteins.. Functionally, participates in the folding of proteins containing disulfide bonds, may be involved in glycosylation, prolyl hydroxylation and triglyceride transfer. This Aspergillus oryzae (strain ATCC 42149 / RIB 40) (Yellow koji mold) protein is Protein disulfide-isomerase (pdiA).